Reading from the N-terminus, the 305-residue chain is Nod factor export ATP-binding protein I (305 aa).

One can recognise an ABC transporter domain in the interval 8–237; it reads IDLVGVRKSF…HIGCNVIEIY (230 aa). An ATP-binding site is contributed by 40–47; the sequence is GPNGAGKS.

It belongs to the ABC transporter superfamily. Lipooligosaccharide exporter (TC 3.A.1.102) family. As to quaternary structure, the complex is composed of two ATP-binding proteins (NodI) and two transmembrane proteins (NodJ).

Its subcellular location is the cell inner membrane. In terms of biological role, part of the ABC transporter complex NodIJ involved in the export of the nodulation factors (Nod factors), the bacterial signal molecules that induce symbiosis and subsequent nodulation induction. Nod factors are LCO (lipo-chitin oligosaccharide), a modified beta-1,4-linked N-acetylglucosamine oligosaccharide. This subunit is responsible for energy coupling to the transport system. In Bradyrhizobium sp. (strain SNU001), this protein is Nod factor export ATP-binding protein I.